A 1677-amino-acid polypeptide reads, in one-letter code: Zinc finger protein 831 (1677 aa).

The segment covering 1–26 (MEVPEPTCPAPPARDQPAPTPGPPGA) has biased composition (pro residues). Positions 1–43 (MEVPEPTCPAPPARDQPAPTPGPPGAPGGQASPHLTLGPVLLP) are disordered. 2 consecutive C2H2-type zinc fingers follow at residues 144–166 (YLCP…IRSH) and 172–196 (FPCA…TQTH). 10 disordered regions span residues 193-250 (TQTH…SPGA), 270-398 (GSAF…AGLE), 516-557 (WLEP…PSGH), 663-931 (EAAG…VLSA), 950-1062 (TPLP…TCEA), 1100-1119 (NWEL…SGPL), 1137-1176 (LTRP…PFPS), 1216-1243 (LRDE…GPAQ), 1510-1597 (SAES…GQYG), and 1620-1677 (LITR…VIEI). 2 stretches are compositionally biased toward basic and acidic residues: residues 216–232 (EGDK…RGES) and 325–341 (KPWD…KCES). The segment covering 376-385 (EGGPGPGPGV) has biased composition (gly residues). A coiled-coil region spans residues 391 to 423 (GAREAGLELEKKRLEERIAQLISHNQAVVDDAQ). Basic and acidic residues-rich tracts occupy residues 517–526 (LEPREPRDPW), 674–684 (QDRRTPVHEDI), 707–727 (PTKH…RVEE), and 813–834 (SGED…HSWK). Low complexity-rich tracts occupy residues 880–894 (LESS…SVAL) and 905–919 (PLHP…HPSL). The span at 1153–1170 (SSHSGTSRSHSTRSPHST) shows a compositional bias: low complexity. Over residues 1518 to 1531 (QTAGRTLTSSSPDS) the composition is skewed to polar residues. A compositionally biased stretch (basic and acidic residues) spans 1649 to 1662 (RSLEGMRKQTRVEF).

This chain is Zinc finger protein 831 (ZNF831), found in Homo sapiens (Human).